The primary structure comprises 380 residues: Dynactin subunit 2 (380 aa).

The interval 1–40 (MADPKFQNLPGIAYDQPDVYETPDDPETDTSDYYEEEPEN) is disordered. Residues 21 to 40 (ETPDDPETDTSDYYEEEPEN) show a composition bias toward acidic residues. Coiled-coil stretches lie at residues 100-135 (VQKC…QSYD) and 353-377 (ETFA…TAIS).

Belongs to the dynactin subunit 2 family. As to quaternary structure, subunit of dynactin, a multiprotein complex associated with dynein.

It localises to the cytoplasm. It is found in the cytoskeleton. The protein localises to the membrane. In terms of biological role, modulates cytoplasmic dynein binding to an organelle, and plays a role in prometaphase chromosome alignment and spindle organization during mitosis. May play a role in synapse formation during brain development. In Drosophila pseudoobscura pseudoobscura (Fruit fly), this protein is Dynactin subunit 2.